The sequence spans 490 residues: Ribulose bisphosphate carboxylase large chain (490 aa).

2 residues coordinate substrate: asparagine 127 and threonine 177. Catalysis depends on lysine 179, which acts as the Proton acceptor. Substrate is bound at residue lysine 181. Positions 205, 207, and 208 each coordinate Mg(2+). Lysine 205 is subject to N6-carboxylysine. Catalysis depends on histidine 297, which acts as the Proton acceptor. Substrate-binding residues include arginine 298, histidine 330, and serine 382.

This sequence belongs to the RuBisCO large chain family. Type I subfamily. Heterohexadecamer of 8 large chains and 8 small chains. It depends on Mg(2+) as a cofactor.

It localises to the plastid. Its subcellular location is the chloroplast. It catalyses the reaction 2 (2R)-3-phosphoglycerate + 2 H(+) = D-ribulose 1,5-bisphosphate + CO2 + H2O. The enzyme catalyses D-ribulose 1,5-bisphosphate + O2 = 2-phosphoglycolate + (2R)-3-phosphoglycerate + 2 H(+). In terms of biological role, ruBisCO catalyzes two reactions: the carboxylation of D-ribulose 1,5-bisphosphate, the primary event in carbon dioxide fixation, as well as the oxidative fragmentation of the pentose substrate in the photorespiration process. Both reactions occur simultaneously and in competition at the same active site. The protein is Ribulose bisphosphate carboxylase large chain of Phaeodactylum tricornutum (strain CCAP 1055/1).